Reading from the N-terminus, the 1252-residue chain is DNA-directed RNA polymerase subunit beta (1252 aa).

This sequence belongs to the RNA polymerase beta chain family. The RNAP catalytic core consists of 2 alpha, 1 beta, 1 beta' and 1 omega subunit. When a sigma factor is associated with the core the holoenzyme is formed, which can initiate transcription.

The enzyme catalyses RNA(n) + a ribonucleoside 5'-triphosphate = RNA(n+1) + diphosphate. DNA-dependent RNA polymerase catalyzes the transcription of DNA into RNA using the four ribonucleoside triphosphates as substrates. This chain is DNA-directed RNA polymerase subunit beta, found in Chlamydia trachomatis serovar L2 (strain ATCC VR-902B / DSM 19102 / 434/Bu).